An 84-amino-acid chain; its full sequence is Large ribosomal subunit protein bL27 (84 aa).

The segment at 1–22 (MAHKKGASSTRNGRDSNAQRLG) is disordered. Residues 7–19 (ASSTRNGRDSNAQ) are compositionally biased toward polar residues.

It belongs to the bacterial ribosomal protein bL27 family.

The sequence is that of Large ribosomal subunit protein bL27 from Streptomyces avermitilis (strain ATCC 31267 / DSM 46492 / JCM 5070 / NBRC 14893 / NCIMB 12804 / NRRL 8165 / MA-4680).